A 99-amino-acid chain; its full sequence is Glycine-rich protein (99 aa).

Residues 1–18 (MKSMIAVLLLALVATSMA) form the signal peptide.

The protein belongs to the non-disulfide-bridged peptide (NDBP) superfamily. As to expression, expressed by the venom gland.

It is found in the secreted. The chain is Glycine-rich protein from Lychas mucronatus (Chinese swimming scorpion).